A 191-amino-acid polypeptide reads, in one-letter code: MYIIIGLGNPTREYEATRHNIGFDAITRLADDNNISLDTKKHKAICGKGMIGGEKVILAKPQTYMNLSGESVRELIDFYKVTKEEIIVIYDDISLDVGQLRIRTKGSAGGHNGIKNIIAHLGSDEFCRIKIGVGDKPKNWDLADYVLARFPKEEEPAIREALEKVSKACETILRDGAKVAMNLFNKKEINT.

Tyr14 serves as a coordination point for tRNA. Catalysis depends on His19, which acts as the Proton acceptor. TRNA contacts are provided by Tyr64, Asn66, and Asn112.

The protein belongs to the PTH family. As to quaternary structure, monomer.

It is found in the cytoplasm. The enzyme catalyses an N-acyl-L-alpha-aminoacyl-tRNA + H2O = an N-acyl-L-amino acid + a tRNA + H(+). Its function is as follows. Hydrolyzes ribosome-free peptidyl-tRNAs (with 1 or more amino acids incorporated), which drop off the ribosome during protein synthesis, or as a result of ribosome stalling. In terms of biological role, catalyzes the release of premature peptidyl moieties from peptidyl-tRNA molecules trapped in stalled 50S ribosomal subunits, and thus maintains levels of free tRNAs and 50S ribosomes. This is Peptidyl-tRNA hydrolase from Lachnoclostridium phytofermentans (strain ATCC 700394 / DSM 18823 / ISDg) (Clostridium phytofermentans).